The sequence spans 164 residues: FMN reductase (NADH) RutF (164 aa).

Belongs to the non-flavoprotein flavin reductase family. RutF subfamily.

The catalysed reaction is FMNH2 + NAD(+) = FMN + NADH + 2 H(+). Functionally, catalyzes the reduction of FMN to FMNH2 which is used to reduce pyrimidine by RutA via the Rut pathway. This Enterobacter sp. (strain 638) protein is FMN reductase (NADH) RutF.